The sequence spans 67 residues: Large ribosomal subunit protein bL32 (67 aa).

Over residues 1 to 19 (MAVPKRKQSRANTHARRSQ) the composition is skewed to basic residues. A disordered region spans residues 1-20 (MAVPKRKQSRANTHARRSQW).

Belongs to the bacterial ribosomal protein bL32 family.

This Leifsonia xyli subsp. xyli (strain CTCB07) protein is Large ribosomal subunit protein bL32.